The following is a 602-amino-acid chain: UvrABC system protein C (602 aa).

One can recognise a GIY-YIG domain in the interval 19–97; the sequence is EEPGVYRMIG…IKSLAPRYNI (79 aa). The 36-residue stretch at 206–241 folds into the UVR domain; sequence SEVIDDLTARMHAAAERLAFEEAAACRDQVRVLQAV.

Belongs to the UvrC family. As to quaternary structure, interacts with UvrB in an incision complex.

It localises to the cytoplasm. Its function is as follows. The UvrABC repair system catalyzes the recognition and processing of DNA lesions. UvrC both incises the 5' and 3' sides of the lesion. The N-terminal half is responsible for the 3' incision and the C-terminal half is responsible for the 5' incision. This Aromatoleum aromaticum (strain DSM 19018 / LMG 30748 / EbN1) (Azoarcus sp. (strain EbN1)) protein is UvrABC system protein C.